The following is a 243-amino-acid chain: tRNA (guanine-N(1)-)-methyltransferase (243 aa).

S-adenosyl-L-methionine contacts are provided by residues G108 and 127–132 (LGDFVL).

This sequence belongs to the RNA methyltransferase TrmD family. In terms of assembly, homodimer.

Its subcellular location is the cytoplasm. The enzyme catalyses guanosine(37) in tRNA + S-adenosyl-L-methionine = N(1)-methylguanosine(37) in tRNA + S-adenosyl-L-homocysteine + H(+). In terms of biological role, specifically methylates guanosine-37 in various tRNAs. The sequence is that of tRNA (guanine-N(1)-)-methyltransferase from Streptococcus equi subsp. zooepidemicus (strain MGCS10565).